We begin with the raw amino-acid sequence, 127 residues long: UPF0166 protein PH1503 (127 aa).

This sequence belongs to the UPF0166 family.

This chain is UPF0166 protein PH1503, found in Pyrococcus horikoshii (strain ATCC 700860 / DSM 12428 / JCM 9974 / NBRC 100139 / OT-3).